Consider the following 298-residue polypeptide: tRNA uridine(34) hydroxylase (298 aa).

A Rhodanese domain is found at 123-217 (QNPDVTLVDT…YLEEIPVAES (95 aa)). Cysteine 177 serves as the catalytic Cysteine persulfide intermediate.

This sequence belongs to the TrhO family.

The catalysed reaction is uridine(34) in tRNA + AH2 + O2 = 5-hydroxyuridine(34) in tRNA + A + H2O. Catalyzes oxygen-dependent 5-hydroxyuridine (ho5U) modification at position 34 in tRNAs. This Picosynechococcus sp. (strain ATCC 27264 / PCC 7002 / PR-6) (Agmenellum quadruplicatum) protein is tRNA uridine(34) hydroxylase.